Reading from the N-terminus, the 256-residue chain is Peroxisomal membrane protein PMP30B (256 aa).

Belongs to the peroxin-11 family.

It localises to the peroxisome membrane. Functionally, involved in peroxisomal proliferation. Could participate in peroxisomal elongation or fission. May be involved in parceling of peroxisomes into regular quanta. The sequence is that of Peroxisomal membrane protein PMP30B (PEX11B) from Candida boidinii (Yeast).